Reading from the N-terminus, the 241-residue chain is Small ribosomal subunit protein uS2 (241 aa).

It belongs to the universal ribosomal protein uS2 family.

The chain is Small ribosomal subunit protein uS2 from Pectobacterium carotovorum subsp. carotovorum (strain PC1).